A 317-amino-acid chain; its full sequence is MATHDNTEHVSDATDEAVGWESKLRYFLNSDFVRSAPYWGIPFVLMSIAVYGGTGYNFAISFTDYEGLGTPDYSTLDLEMYAQALSSDAFIAAAQNNLVLLVGFTTICLVLGLFLAILLDHGIRFSEKFQTVYLLPMSLSFVVTAQLWLWMFNVESGILNLVVTTLGFNPVDWLGNPSIALGAVILALIWQFSGYTMVVYLAGLQSIPDDQFEAARVDGASITRTYLRIIVPQLKEASVSAAVVLMVFALKAFTFLYALVGRYRPPNGTDILATLMVRRAFKFGEWAYSAAIATMLLIMALGVIGPYLYYQYKQGGL.

6 helical membrane-spanning segments follow: residues 40–60 (GIPF…NFAI), 98–118 (LVLL…LAIL), 132–152 (VYLL…LWMF), 179–199 (IALG…TMVV), 241–261 (AAVV…ALVG), and 290–310 (AAIA…YLYY). The ABC transmembrane type-1 domain occupies 94 to 309 (AQNNLVLLVG…ALGVIGPYLY (216 aa)).

Belongs to the binding-protein-dependent transport system permease family. In terms of assembly, the complex is composed of two ATP-binding proteins (XacJ and XacK), two transmembrane proteins (XacH and XacI) and a solute-binding protein (XacG).

It localises to the cell membrane. Part of the ABC transporter complex XacGHIJK involved in the uptake of xylose and arabinose. Responsible for the translocation of the substrate across the membrane. The protein is Xylose/arabinose import permease protein XacH of Haloferax volcanii (strain ATCC 29605 / DSM 3757 / JCM 8879 / NBRC 14742 / NCIMB 2012 / VKM B-1768 / DS2) (Halobacterium volcanii).